Here is a 305-residue protein sequence, read N- to C-terminus: Acetyl-coenzyme A carboxylase carboxyl transferase subunit beta (305 aa).

A CoA carboxyltransferase N-terminal domain is found at 27 to 296 (LWVKCSACRE…PAAKADLAAR (270 aa)). Zn(2+) is bound by residues Cys31, Cys34, Cys50, and Cys53. The C4-type zinc-finger motif lies at 31–53 (CSACRELIYKKQLNDNLKVCPKC).

It belongs to the AccD/PCCB family. Acetyl-CoA carboxylase is a heterohexamer composed of biotin carboxyl carrier protein (AccB), biotin carboxylase (AccC) and two subunits each of ACCase subunit alpha (AccA) and ACCase subunit beta (AccD). The cofactor is Zn(2+).

The protein localises to the cytoplasm. It carries out the reaction N(6)-carboxybiotinyl-L-lysyl-[protein] + acetyl-CoA = N(6)-biotinyl-L-lysyl-[protein] + malonyl-CoA. The protein operates within lipid metabolism; malonyl-CoA biosynthesis; malonyl-CoA from acetyl-CoA: step 1/1. Component of the acetyl coenzyme A carboxylase (ACC) complex. Biotin carboxylase (BC) catalyzes the carboxylation of biotin on its carrier protein (BCCP) and then the CO(2) group is transferred by the transcarboxylase to acetyl-CoA to form malonyl-CoA. This Chloroflexus aggregans (strain MD-66 / DSM 9485) protein is Acetyl-coenzyme A carboxylase carboxyl transferase subunit beta.